The chain runs to 230 residues: 2-C-methyl-D-erythritol 4-phosphate cytidylyltransferase (230 aa).

Belongs to the IspD/TarI cytidylyltransferase family. IspD subfamily.

The enzyme catalyses 2-C-methyl-D-erythritol 4-phosphate + CTP + H(+) = 4-CDP-2-C-methyl-D-erythritol + diphosphate. It functions in the pathway isoprenoid biosynthesis; isopentenyl diphosphate biosynthesis via DXP pathway; isopentenyl diphosphate from 1-deoxy-D-xylulose 5-phosphate: step 2/6. In terms of biological role, catalyzes the formation of 4-diphosphocytidyl-2-C-methyl-D-erythritol from CTP and 2-C-methyl-D-erythritol 4-phosphate (MEP). The protein is 2-C-methyl-D-erythritol 4-phosphate cytidylyltransferase of Nocardia farcinica (strain IFM 10152).